The following is a 601-amino-acid chain: Glutathione-regulated potassium-efflux system protein KefB (601 aa).

Helical transmembrane passes span 4 to 24 (ADLL…VPLA), 29 to 49 (IGAV…GLGF), 55 to 75 (EILH…GLEL), 87 to 107 (IFGV…GLLM), 111 to 131 (FLWQ…TAMA), 152 to 172 (VLLF…LLAG), 177 to 197 (HFDW…LIGG), 207 to 227 (FIAA…LVLS), 230 to 250 (LFMD…GVLL), 262 to 282 (AIDP…GMSL), 284 to 304 (LGVL…LVVI), 324 to 344 (MQFA…FSTA), and 356 to 376 (ALLL…MKGI). The 120-residue stretch at 400 to 519 (KPQVIVVGFG…AGVTQFSRET (120 aa)) folds into the RCK N-terminal domain.

Belongs to the monovalent cation:proton antiporter 2 (CPA2) transporter (TC 2.A.37) family. KefB subfamily. As to quaternary structure, interacts with the regulatory subunit KefG.

It localises to the cell inner membrane. Pore-forming subunit of a potassium efflux system that confers protection against electrophiles. Catalyzes K(+)/H(+) antiport. This Salmonella heidelberg (strain SL476) protein is Glutathione-regulated potassium-efflux system protein KefB.